We begin with the raw amino-acid sequence, 194 residues long: Cytochrome bo(3) ubiquinol oxidase subunit 3 (194 aa).

Topologically, residues 1–18 (MKKKYKIDTNIFSKELLG) are cytoplasmic. The helical transmembrane segment at 19-41 (FWLYLMSDCIIFCTLFSVYFILV) threads the bilayer. The Extracellular portion of the chain corresponds to 42–55 (DNVAQGPSGHNIFQ). Residues 56–78 (NNLIIIETFLLLFSSFSCNLVLF) form a helical membrane-spanning segment. The Cytoplasmic portion of the chain corresponds to 79-84 (EMKNKN). A helical transmembrane segment spans residues 85–107 (LYMVFLWLGITFLLGLLFVFLEL). Residues 108–126 (FEFFHLINLGFGPTRSGFL) are Extracellular-facing. A helical transmembrane segment spans residues 127–149 (SSFFVLIATHGIHVISGLIWIIV). Over 150-169 (MIKYVYTFNITNLIYYRMLC) the chain is Cytoplasmic. The chain crosses the membrane as a helical span at residues 170-192 (LNLFWHFLDIVWVFIFSFVYLFG). Residues 193–194 (MV) are Extracellular-facing.

This sequence belongs to the cytochrome c oxidase subunit 3 family. In terms of assembly, heterooctamer of two A chains, two B chains, two C chains and two D chains.

Its subcellular location is the cell membrane. Functionally, cytochrome bo(3) ubiquinol terminal oxidase is the component of the aerobic respiratory chain of E.coli that predominates when cells are grown at high aeration. Has proton pump activity across the membrane in addition to electron transfer, pumping 2 protons/electron. This chain is Cytochrome bo(3) ubiquinol oxidase subunit 3 (cyoC), found in Buchnera aphidicola subsp. Baizongia pistaciae (strain Bp).